We begin with the raw amino-acid sequence, 624 residues long: Chaperone protein HtpG (624 aa).

The a; substrate-binding stretch occupies residues 1–336 (MKGQETRGFQ…SNDLPLNVSR (336 aa)). Positions 337-552 (EILQDSSVTR…ADEMSTQMAK (216 aa)) are b. Residues 553-624 (LFAAAGQAAP…IRRMNQLLAS (72 aa)) are c.

Belongs to the heat shock protein 90 family. In terms of assembly, homodimer.

It is found in the cytoplasm. In terms of biological role, molecular chaperone. Has ATPase activity. The polypeptide is Chaperone protein HtpG (Klebsiella pneumoniae subsp. pneumoniae (strain ATCC 700721 / MGH 78578)).